We begin with the raw amino-acid sequence, 338 residues long: 1-aminocyclopropane-1-carboxylate deaminase (338 aa).

Position 51 is an N6-(pyridoxal phosphate)lysine (lysine 51). Serine 78 functions as the Nucleophile in the catalytic mechanism.

It belongs to the ACC deaminase/D-cysteine desulfhydrase family. Homotrimer. Pyridoxal 5'-phosphate serves as cofactor.

It catalyses the reaction 1-aminocyclopropane-1-carboxylate + H2O = 2-oxobutanoate + NH4(+). In terms of biological role, catalyzes a cyclopropane ring-opening reaction, the irreversible conversion of 1-aminocyclopropane-1-carboxylate (ACC) to ammonia and alpha-ketobutyrate. Allows growth on ACC as a nitrogen source. This Variovorax paradoxus protein is 1-aminocyclopropane-1-carboxylate deaminase.